The chain runs to 404 residues: Pleckstrin homology domain-containing family A member 1 (404 aa).

PH domains follow at residues glutamine 7–lysine 112 and alanine 191–valine 289. Disordered stretches follow at residues glutamine 291–serine 332 and asparagine 355–valine 404. A compositionally biased stretch (low complexity) spans threonine 316–serine 332. 2 positions are modified to phosphoserine: serine 332 and serine 362.

In terms of assembly, interacts with MPDZ and PTPN13. Highly expressed in skeletal muscle, thymus, pancreas, placenta and lung. Detected at low levels in brain, heart, peripheral blood leukocytes, testis, ovary, spinal cord, thyroid, kidney, liver, small intestine and colon.

Its subcellular location is the cytoplasm. The protein localises to the cell membrane. It is found in the nucleus. In terms of biological role, binds specifically to phosphatidylinositol 3,4-diphosphate (PtdIns3,4P2), but not to other phosphoinositides. May recruit other proteins to the plasma membrane. The protein is Pleckstrin homology domain-containing family A member 1 (PLEKHA1) of Homo sapiens (Human).